Consider the following 231-residue polypeptide: Protein INCA1 (231 aa).

The tract at residues 75–99 is interaction with CCNA1 and CCNA1/CDK2 complex; essential for CDK2 inhibitory activity; it reads SLHPLEGLPPPEKLWRRKRKKLHLE. Residues 90 to 95 carry the Nuclear localization signal motif; that stretch reads RRKRKK. Phosphothreonine is present on Thr180.

This sequence belongs to the INCA family. In terms of assembly, interacts with CCNA1. Identified in a complex with CCNA1 and CDK2. Interacts with ZNF16; the interaction inhibits INCA1 activity and induces the cell cycle process. Interacts with SPACA9. Interacts with CCNA2, CCNB1 and CCNE1. Interacts with the CCNA1/CDK2 complex. Interacts with ING5, DAZAP2, RNF26, USP15, SPOUT1, DPH7, TRIM26 and RAB5C. Phosphorylated when part of a complex with CCNA1 and CDK2.

The protein localises to the nucleus. It localises to the cytoplasm. In terms of biological role, binds to CDK2-bound cyclins and inhibits the kinase activity of CDK2; binding to cyclins is critical for its function as CDK inhibitor. Inhibits cell growth and proliferation and may play a role in cell cycle control. Required for ING5-mediated regulation of S-phase progression, enhancement of Fas-induced apoptosis and inhibition of cell growth. The chain is Protein INCA1 (Inca1) from Mus musculus (Mouse).